Here is a 247-residue protein sequence, read N- to C-terminus: 5'-nucleotidase SurE (247 aa).

A divalent metal cation contacts are provided by aspartate 8, aspartate 9, serine 39, and asparagine 91.

It belongs to the SurE nucleotidase family. The cofactor is a divalent metal cation.

The protein resides in the cytoplasm. It carries out the reaction a ribonucleoside 5'-phosphate + H2O = a ribonucleoside + phosphate. Its function is as follows. Nucleotidase that shows phosphatase activity on nucleoside 5'-monophosphates. This Nitrosomonas europaea (strain ATCC 19718 / CIP 103999 / KCTC 2705 / NBRC 14298) protein is 5'-nucleotidase SurE.